Consider the following 303-residue polypeptide: MDLRFSEEVRRALEAGQPLVALETSVVAQGLPYPDNLAAARACEEAIRRAGAVPAATAIIDGQLCVGLEEPEMRRLAEGKERLLKVASRDFAVAMATRATGGTTVSATCEMAAAAGIRVFSTGGIGGVHRGASEHFDISQDIAALARFPVAVVCAGAKSVLDLPKTMELLETAGVPVIGVGTDELPSFYSRGSGIPLEHRADDVDTAARIARARFESLKQGGVLYTVPPPEETSLPRNEVELHIAATLADADRQGIRGKAVTPFLLSEMAKRTGGKTLKANLALLTNNARFAGQLAVAYARAS.

E23 acts as the Proton donor in catalysis. Substrate contacts are provided by K85 and V105. D137 contacts Mn(2+). Position 139 to 141 (139 to 141) interacts with substrate; the sequence is SQD. K158 (nucleophile) is an active-site residue.

This sequence belongs to the pseudouridine-5'-phosphate glycosidase family. Homotrimer. The cofactor is Mn(2+).

It catalyses the reaction D-ribose 5-phosphate + uracil = psi-UMP + H2O. Catalyzes the reversible cleavage of pseudouridine 5'-phosphate (PsiMP) to ribose 5-phosphate and uracil. Functions biologically in the cleavage direction, as part of a pseudouridine degradation pathway. This chain is Pseudouridine-5'-phosphate glycosidase, found in Myxococcus xanthus (strain DK1622).